Reading from the N-terminus, the 482-residue chain is Putative dipeptidase NECHADRAFT_87110 (482 aa).

Over residues M1–A21 the composition is skewed to polar residues. The segment at M1–E24 is disordered. The N-linked (GlcNAc...) asparagine glycan is linked to N18. Residues W41–F61 form a helical membrane-spanning segment. 3 residues coordinate Zn(2+): H90, D92, and E201. C141 and C230 are joined by a disulfide. A substrate-binding site is contributed by H228. Residues H272 and H293 each contribute to the Zn(2+) site. Residues R304 and D364 each contribute to the substrate site.

The protein belongs to the metallo-dependent hydrolases superfamily. Peptidase M19 family. It depends on Zn(2+) as a cofactor.

Its subcellular location is the membrane. The catalysed reaction is an L-aminoacyl-L-amino acid + H2O = 2 an L-alpha-amino acid. In terms of biological role, hydrolyzes a wide range of dipeptides. This chain is Putative dipeptidase NECHADRAFT_87110, found in Fusarium vanettenii (strain ATCC MYA-4622 / CBS 123669 / FGSC 9596 / NRRL 45880 / 77-13-4) (Fusarium solani subsp. pisi).